A 470-amino-acid polypeptide reads, in one-letter code: tRNA-2-methylthio-N(6)-dimethylallyladenosine synthase (470 aa).

The region spanning 1–116 (MTYTVRTYGC…LPALLRRSRH (116 aa)) is the MTTase N-terminal domain. 6 residues coordinate [4Fe-4S] cluster: Cys-10, Cys-45, Cys-79, Cys-153, Cys-157, and Cys-160. Positions 139 to 369 (RESNYSAWVS…LDLQNRIALE (231 aa)) constitute a Radical SAM core domain. The TRAM domain occupies 372-439 (RKLIGKEVEL…PYHLIGDNAL (68 aa)).

Belongs to the methylthiotransferase family. MiaB subfamily. As to quaternary structure, monomer. The cofactor is [4Fe-4S] cluster.

The protein localises to the cytoplasm. It catalyses the reaction N(6)-dimethylallyladenosine(37) in tRNA + (sulfur carrier)-SH + AH2 + 2 S-adenosyl-L-methionine = 2-methylsulfanyl-N(6)-dimethylallyladenosine(37) in tRNA + (sulfur carrier)-H + 5'-deoxyadenosine + L-methionine + A + S-adenosyl-L-homocysteine + 2 H(+). Its function is as follows. Catalyzes the methylthiolation of N6-(dimethylallyl)adenosine (i(6)A), leading to the formation of 2-methylthio-N6-(dimethylallyl)adenosine (ms(2)i(6)A) at position 37 in tRNAs that read codons beginning with uridine. The polypeptide is tRNA-2-methylthio-N(6)-dimethylallyladenosine synthase (Tropheryma whipplei (strain Twist) (Whipple's bacillus)).